A 60-amino-acid polypeptide reads, in one-letter code: MAVQQNKKSPSKRGMHRSHNALVVPGIAVEPTTGETHLRHHISPNGFYRGRQVLKNKSEA.

Disordered regions lie at residues 1 to 22 (MAVQ…HNAL) and 34 to 60 (GETH…KSEA). The span at 9–19 (SPSKRGMHRSH) shows a compositional bias: basic residues.

The protein belongs to the bacterial ribosomal protein bL32 family.

In Variovorax paradoxus (strain S110), this protein is Large ribosomal subunit protein bL32.